A 188-amino-acid polypeptide reads, in one-letter code: Ion-translocating oxidoreductase complex subunit B (188 aa).

The interval 1 to 23 (MFTAIWVMVGLAIAIGLILGWSA) is hydrophobic. Positions 29–88 (EGNPLAEKIDAILPQTQCGQCGFPGCRPYAEAIAKGEADINQCPPGGEEGVKKLAELLGV) constitute a 4Fe-4S domain. [4Fe-4S] cluster-binding residues include Cys-46, Cys-49, Cys-54, Cys-71, Cys-113, Cys-116, Cys-119, Cys-123, Cys-143, Cys-146, Cys-149, and Cys-153. 4Fe-4S ferredoxin-type domains are found at residues 104 to 133 (SVAF…GAAK) and 134 to 163 (QMHT…MVPI).

This sequence belongs to the 4Fe4S bacterial-type ferredoxin family. RnfB subfamily. As to quaternary structure, the complex is composed of six subunits: RnfA, RnfB, RnfC, RnfD, RnfE and RnfG. The cofactor is [4Fe-4S] cluster.

The protein resides in the cell inner membrane. In terms of biological role, part of a membrane-bound complex that couples electron transfer with translocation of ions across the membrane. The chain is Ion-translocating oxidoreductase complex subunit B from Thiobacillus denitrificans (strain ATCC 25259 / T1).